Reading from the N-terminus, the 1091-residue chain is Protein JSN1 (1091 aa).

Disordered regions lie at residues 31–51 (EYENNGESNSQLQQQPQKLGS) and 75–131 (HHSK…GSLT). Polar residues predominate over residues 99-111 (TVASKTPRASPSR). A Phosphoserine modification is found at S129. T131 carries the phosphothreonine modification. Phosphoserine is present on residues S160 and S168. Residues 340–426 (NTISISNVFP…APSKISFAKI (87 aa)) form the RRM domain. Composition is skewed to low complexity over residues 482–494 (QQSQQSQHQNHSS) and 507–520 (NNNNSMHGNNNNSA). Disordered regions lie at residues 482–534 (QQSQ…PPPN) and 568–591 (HKGTSDTQNFGPLPEPLSGREFDP). The PUM-HD domain occupies 557 to 913 (QINSLIKKSL…RLLEEVGLAS (357 aa)). The segment covering 568–577 (HKGTSDTQNF) has biased composition (polar residues). Pumilio repeat units follow at residues 617 to 652 (AMLDELPELSSDYLGNTIVQKLFEHSSDIIKDIMLR), 653 to 689 (KTSKYLTSMGVHKNGTWACQKMITMAHTPRQIMQVTQ), 690 to 724 (GVKDYCTPLINDQFGNYVIQCVLKFGFPWNQFIFE), 725 to 760 (SIIANFWVIVQNRYGARAVRACLEAHDIVTPEQSIV), and 801 to 837 (RLTKRIVELCGHRLASLTILKVLNYRGDDNARKIILD). Residues 911-981 (LASPSSTHNK…GSSASTLSPG (71 aa)) form a disordered region. At S913 the chain carries Phosphoserine. 2 stretches are compositionally biased toward low complexity: residues 915–935 (SSTHNKTKQQQQQHHNSSISH) and 951–979 (SVSSVKSGGSKHTTMNTTTTNGSSASTLS).

The sequence is that of Protein JSN1 (JSN1) from Saccharomyces cerevisiae (strain ATCC 204508 / S288c) (Baker's yeast).